Reading from the N-terminus, the 223-residue chain is Cytidylate kinase (223 aa).

A disordered region spans residues 1-23; that stretch reads MSTSPLVIAIDGPSGSGKSSTSR. 12 to 20 serves as a coordination point for ATP; the sequence is GPSGSGKSS.

Belongs to the cytidylate kinase family. Type 1 subfamily.

It localises to the cytoplasm. The enzyme catalyses CMP + ATP = CDP + ADP. It catalyses the reaction dCMP + ATP = dCDP + ADP. The protein is Cytidylate kinase of Cutibacterium acnes (strain DSM 16379 / KPA171202) (Propionibacterium acnes).